Reading from the N-terminus, the 930-residue chain is Isoleucine--tRNA ligase (930 aa).

A 'HIGH' region motif is present at residues 57-67 (PYANGNIHVGH). L-isoleucyl-5'-AMP is bound at residue Glu554. The 'KMSKS' region motif lies at 595–599 (KMSKS). Position 598 (Lys598) interacts with ATP. The Zn(2+) site is built by Cys888, Cys891, Cys908, and Cys911.

This sequence belongs to the class-I aminoacyl-tRNA synthetase family. IleS type 1 subfamily. As to quaternary structure, monomer. Zn(2+) serves as cofactor.

The protein resides in the cytoplasm. It catalyses the reaction tRNA(Ile) + L-isoleucine + ATP = L-isoleucyl-tRNA(Ile) + AMP + diphosphate. Functionally, catalyzes the attachment of isoleucine to tRNA(Ile). As IleRS can inadvertently accommodate and process structurally similar amino acids such as valine, to avoid such errors it has two additional distinct tRNA(Ile)-dependent editing activities. One activity is designated as 'pretransfer' editing and involves the hydrolysis of activated Val-AMP. The other activity is designated 'posttransfer' editing and involves deacylation of mischarged Val-tRNA(Ile). The protein is Isoleucine--tRNA ligase of Streptococcus pneumoniae serotype 19F (strain G54).